Reading from the N-terminus, the 486-residue chain is ATP synthase subunit beta, chloroplastic (486 aa).

154 to 161 (GGAGVGKT) contacts ATP.

Belongs to the ATPase alpha/beta chains family. F-type ATPases have 2 components, CF(1) - the catalytic core - and CF(0) - the membrane proton channel. CF(1) has five subunits: alpha(3), beta(3), gamma(1), delta(1), epsilon(1). CF(0) has four main subunits: a(1), b(1), b'(1) and c(9-12).

The protein localises to the plastid. Its subcellular location is the chloroplast thylakoid membrane. The enzyme catalyses ATP + H2O + 4 H(+)(in) = ADP + phosphate + 5 H(+)(out). Produces ATP from ADP in the presence of a proton gradient across the membrane. The catalytic sites are hosted primarily by the beta subunits. The sequence is that of ATP synthase subunit beta, chloroplastic from Dennstaedtia punctilobula (Hay-scented fern).